The following is a 347-amino-acid chain: Malate dehydrogenase, mitochondrial (347 aa).

The N-terminal 27 residues, 1–27 (MKASILRSVRSAVSRSSSSNRLLSRSF), are a transit peptide targeting the mitochondrion. NAD(+) contacts are provided by residues 41–47 (GAAGGIG) and Asp-67. Residues Arg-114 and Arg-120 each coordinate substrate. Residues Asn-127 and 150–152 (ISN) each bind NAD(+). 2 residues coordinate substrate: Asn-152 and Arg-186. The active-site Proton acceptor is the His-210. Residue Met-261 coordinates NAD(+).

It belongs to the LDH/MDH superfamily. MDH type 1 family. As to quaternary structure, homodimer.

The protein resides in the mitochondrion matrix. The catalysed reaction is (S)-malate + NAD(+) = oxaloacetate + NADH + H(+). The protein is Malate dehydrogenase, mitochondrial (MMDH) of Citrullus lanatus (Watermelon).